A 246-amino-acid chain; its full sequence is Transcription factor MYB13 (246 aa).

HTH myb-type domains are found at residues 9–61 (KIGL…INYL) and 62–116 (RPDI…KKRL). 2 consecutive DNA-binding regions (H-T-H motif) follow at residues 37–61 (WRALPKLAGLLRCGKSCRLRWINYL) and 89–112 (WSAIAAKLPGRTDNEIKNVWHTHL).

As to expression, expressed in roots and flowers. Expressed in shoot apex, axillary buds, at the basis of flowers and branching points of inflorescences.

It localises to the nucleus. In terms of biological role, plays a regulatory role in meristem function. Functions as component of a regulatory network controlling the establishment and/or development of the shoot system by the regulation of apical meristem function. May play a role in tolerance to boric acid. The chain is Transcription factor MYB13 from Arabidopsis thaliana (Mouse-ear cress).